Here is a 150-residue protein sequence, read N- to C-terminus: uncharacterized protein (150 aa).

Residues 81–90 (TTKPSCSFAQ) show a composition bias toward polar residues. The segment at 81 to 125 (TTKPSCSFAQPVTPRTREGAGVRGHRRRRRGSLSLIPWKTSNDKQ) is disordered.

This is an uncharacterized protein from Homo sapiens (Human).